The chain runs to 290 residues: ATP synthase gamma chain (290 aa).

This sequence belongs to the ATPase gamma chain family. In terms of assembly, F-type ATPases have 2 components, CF(1) - the catalytic core - and CF(0) - the membrane proton channel. CF(1) has five subunits: alpha(3), beta(3), gamma(1), delta(1), epsilon(1). CF(0) has three main subunits: a, b and c.

It localises to the cell inner membrane. Functionally, produces ATP from ADP in the presence of a proton gradient across the membrane. The gamma chain is believed to be important in regulating ATPase activity and the flow of protons through the CF(0) complex. This chain is ATP synthase gamma chain, found in Thiobacillus denitrificans (strain ATCC 25259 / T1).